We begin with the raw amino-acid sequence, 330 residues long: Aspartate--ammonia ligase (330 aa).

This sequence belongs to the class-II aminoacyl-tRNA synthetase family. AsnA subfamily.

The protein resides in the cytoplasm. The catalysed reaction is L-aspartate + NH4(+) + ATP = L-asparagine + AMP + diphosphate + H(+). It participates in amino-acid biosynthesis; L-asparagine biosynthesis; L-asparagine from L-aspartate (ammonia route): step 1/1. The polypeptide is Aspartate--ammonia ligase (Streptococcus agalactiae serotype Ia (strain ATCC 27591 / A909 / CDC SS700)).